The chain runs to 171 residues: Large ribosomal subunit protein uL10 (171 aa).

It belongs to the universal ribosomal protein uL10 family. As to quaternary structure, part of the ribosomal stalk of the 50S ribosomal subunit. The N-terminus interacts with L11 and the large rRNA to form the base of the stalk. The C-terminus forms an elongated spine to which L12 dimers bind in a sequential fashion forming a multimeric L10(L12)X complex.

Forms part of the ribosomal stalk, playing a central role in the interaction of the ribosome with GTP-bound translation factors. This chain is Large ribosomal subunit protein uL10, found in Sphingopyxis alaskensis (strain DSM 13593 / LMG 18877 / RB2256) (Sphingomonas alaskensis).